Here is a 393-residue protein sequence, read N- to C-terminus: Methylthioribose kinase (393 aa).

ATP-binding positions include asparagine 38, lysine 53, and 107 to 109 (EDL). Position 225 (aspartate 225) interacts with substrate. 242 to 244 (DPE) serves as a coordination point for ATP. Arginine 332 is a substrate binding site.

Belongs to the methylthioribose kinase family. In terms of assembly, homodimer.

The enzyme catalyses 5-(methylsulfanyl)-D-ribose + ATP = 5-(methylsulfanyl)-alpha-D-ribose 1-phosphate + ADP + H(+). It participates in amino-acid biosynthesis; L-methionine biosynthesis via salvage pathway; S-methyl-5-thio-alpha-D-ribose 1-phosphate from S-methyl-5'-thioadenosine (hydrolase route): step 2/2. Functionally, catalyzes the phosphorylation of methylthioribose into methylthioribose-1-phosphate. In Bacillus cereus (strain ATCC 14579 / DSM 31 / CCUG 7414 / JCM 2152 / NBRC 15305 / NCIMB 9373 / NCTC 2599 / NRRL B-3711), this protein is Methylthioribose kinase.